A 31-amino-acid polypeptide reads, in one-letter code: Photosystem I reaction center subunit XII (31 aa).

A helical membrane pass occupies residues 7-26 (QIFIALLTALIPAFFALKLG).

The protein belongs to the PsaM family.

It localises to the plastid. The protein resides in the chloroplast thylakoid membrane. This chain is Photosystem I reaction center subunit XII, found in Euglena granulata.